We begin with the raw amino-acid sequence, 141 residues long: Photosystem II protein PSBR, chloroplastic (141 aa).

The transit peptide at 1–27 (MATMQISAKGLAPLRPRVSSRRVVKPV) directs the protein to the chloroplast. 2 positions are modified to phosphothreonine: Thr34 and Thr37. The residue at position 43 (Ser43) is a Phosphoserine. Residues 114–134 (GLIAWAGLVLVLLAVGVNLII) traverse the membrane as a helical segment.

This sequence belongs to the psbR family.

The protein localises to the plastid. It localises to the chloroplast thylakoid membrane. Its function is as follows. Associated with the oxygen-evolving complex of photosystem II (PSII). Is required for the stable binding of LHCSR3 to PSII-LHCII supercomplexes and is essential for efficient energy-dependent quenching and the integrity of the PSII-LHCII-LHCSR3 supercomplex under continuous high light. The sequence is that of Photosystem II protein PSBR, chloroplastic from Chlamydomonas reinhardtii (Chlamydomonas smithii).